The following is a 20-amino-acid chain: Fibrinolytic zinc metalloproteinase (20 aa).

Residues 7–20 (RYVQLVITVDHVMN) enclose the Peptidase M12B domain.

Zn(2+) is required as a cofactor.

It is found in the secreted. Functionally, hydrolyzes alpha and beta chains of human fibrinogen and human fibrin. No activity against the gamma chain of human fibrinogen, human thrombin, bovine serum albumin, ovalbumin and hemoglobin. Has anticoagulant activity on human plasma and protects mice against death due from experimentally induced platelet thromboembolism with an ED(50) of 40 ug/kg. The chain is Fibrinolytic zinc metalloproteinase from Ganoderma lucidum (Ling zhi medicinal fungus).